The chain runs to 668 residues: Probable syringafactin export ATP-binding/permease protein SyfD (668 aa).

The region spanning 22 to 260 (LRLQQVSRSF…APEAQPATPP (239 aa)) is the ABC transporter domain. Position 58–65 (58–65 (GASGSGKS)) interacts with ATP. Positions 242 to 263 (RRTAQTTQPAPEAQPATPPGPA) are disordered. A compositionally biased stretch (low complexity) spans 245 to 256 (AQTTQPAPEAQP). Transmembrane regions (helical) follow at residues 267 to 287 (LLAS…ALIS), 293 to 313 (LLTM…SAIG), 541 to 561 (LTLL…IGVM), 602 to 622 (MGGV…TLFV), and 631 to 651 (LASV…FGFV).

The protein belongs to the ABC transporter superfamily. Macrolide exporter (TC 3.A.1.122) family. Probably part of a tripartite efflux system, which is composed of an inner membrane transporter, a periplasmic membrane fusion protein, and an outer membrane component.

The protein localises to the cell inner membrane. In terms of biological role, probably involved in the export of syringafactins. This is Probable syringafactin export ATP-binding/permease protein SyfD from Pseudomonas syringae pv. tomato (strain ATCC BAA-871 / DC3000).